The chain runs to 316 residues: tRNA dimethylallyltransferase (316 aa).

13–20 (GPTASGKT) is a binding site for ATP. 15 to 20 (TASGKT) is a substrate binding site. Interaction with substrate tRNA stretches follow at residues 38-41 (DSAL), 162-166 (QRINR), 243-248 (RCVGYR), and 276-283 (KRQITWLR).

This sequence belongs to the IPP transferase family. As to quaternary structure, monomer. Mg(2+) serves as cofactor.

It catalyses the reaction adenosine(37) in tRNA + dimethylallyl diphosphate = N(6)-dimethylallyladenosine(37) in tRNA + diphosphate. Catalyzes the transfer of a dimethylallyl group onto the adenine at position 37 in tRNAs that read codons beginning with uridine, leading to the formation of N6-(dimethylallyl)adenosine (i(6)A). This Pasteurella multocida (strain Pm70) protein is tRNA dimethylallyltransferase.